The following is a 359-amino-acid chain: MTTMSDLDEIMVAEILCRTPMTCLKTVRSVCKKWNALSKKWFFFGKAKQFLGFMMMDSRVCSLRFDLRKDLVVEPPSIKQVSILDQIEVSKIFHSDGLLLCIIKNDTTRLLVWNPYLEQTRWIQPRHNFHILDCYAIGHDKNRKHKILRFVDDFLPVENVVFGGNTYFFAKERYIFEGKGPEEIDITETEDFLLCFDFTAERFGPRLPLPFHSYYAETVTLSCVKEDQLSVLCQRQPSEPSEILEIWVSTNIQPNAVSWSIFLKVDMRPLTGFQFNDMAGSFFIDQENKVAVVFDLDPSQICRYQTAYIIGQEYGGYFNSVNIGEVPNLWIPGSVGYADTTSCIPPVCSSYVPSLVQIG.

One can recognise an F-box domain in the interval 2–48 (TTMSDLDEIMVAEILCRTPMTCLKTVRSVCKKWNALSKKWFFFGKAK).

This chain is F-box protein At1g10895, found in Arabidopsis thaliana (Mouse-ear cress).